A 911-amino-acid chain; its full sequence is Protein translocase subunit SecA (911 aa).

Residues glutamine 90, 108 to 112 (GEGKT), and aspartate 515 each bind ATP. Cysteine 891, cysteine 893, cysteine 902, and histidine 903 together coordinate Zn(2+).

The protein belongs to the SecA family. In terms of assembly, monomer and homodimer. Part of the essential Sec protein translocation apparatus which comprises SecA, SecYEG and auxiliary proteins SecDF-YajC and YidC. Zn(2+) serves as cofactor.

It is found in the cell inner membrane. The protein localises to the cytoplasm. It carries out the reaction ATP + H2O + cellular proteinSide 1 = ADP + phosphate + cellular proteinSide 2.. Functionally, part of the Sec protein translocase complex. Interacts with the SecYEG preprotein conducting channel. Has a central role in coupling the hydrolysis of ATP to the transfer of proteins into and across the cell membrane, serving both as a receptor for the preprotein-SecB complex and as an ATP-driven molecular motor driving the stepwise translocation of polypeptide chains across the membrane. The sequence is that of Protein translocase subunit SecA from Blochmanniella pennsylvanica (strain BPEN).